The following is a 294-amino-acid chain: MNYYVGIDGGGTSCRARIRNQQGEWVGEAKSGSANIMLGVEVALRSVVDAITQAAEQGGLSPDDFPSMHVGLALAGAEQKEAWHAFMQQAHPFASITLNTDAYGACLGAHLGEEGAIMIAGTGSCGILLKGGKQYVVGGREFPISDQGSGAVMGLRLIQQVLLAQDGIRPHTPLCDVVMNHFNHDIDSIVAWSKTALPRDYGQFSPQIFSHAYCGDPLAIELLKQTAADIEMFLIALHHKGAERICLMGSIAERIQDWLSPPVQQWIVKPQSDAIEGALMFAGKPEHNLYKDGL.

Position 12 (Thr-12) interacts with ATP. Asp-101 contributes to the substrate binding site. Thr-122 serves as a coordination point for ATP. Substrate is bound by residues 139–141 (GRE) and Asp-146. ATP is bound at residue Gly-202.

The protein belongs to the eukaryotic-type N-acetylglucosamine kinase family.

The protein localises to the cytoplasm. The catalysed reaction is D-glucosamine + ATP = D-glucosamine 6-phosphate + ADP + H(+). Functionally, ATP-dependent kinase, which is specific for glucosamine. Does not show kinase activity with any other sugar. In Vibrio cholerae serotype O1 (strain ATCC 39315 / El Tor Inaba N16961), this protein is Glucosamine kinase GspK (gspK).